The chain runs to 1061 residues: Transcription termination factor 2 (1061 aa).

Disordered stretches follow at residues 1 to 163 and 212 to 253; these read MSSE…TAEA and ILSS…VKTS. Low complexity predominate over residues 32-46; that stretch reads LSKSSRLSKSSRPSS. Phosphoserine occurs at positions 108 and 110. Over residues 138-152 the composition is skewed to acidic residues; that stretch reads LSDDDSEIEYSDEVQ. Phosphoserine occurs at positions 214 and 215. Thr-216 carries the phosphothreonine modification. Residues 237–253 are compositionally biased toward polar residues; the sequence is KSLSPRSSAGASVVKTS. The Helicase ATP-binding domain maps to 452–652; that stretch reads WRERKLPRGG…YALLKFLRCS (201 aa). 465-472 is an ATP binding site; it reads DDMGLGKT. The interval 485–523 is disordered; sequence GQEMSEGKDESSDSDSEDDKNKKRKSVTGWKSKGRKDTR. The segment covering 506 to 522 has biased composition (basic residues); that stretch reads KKRKSVTGWKSKGRKDT. Residues 603-606 carry the DEAH box motif; that stretch reads DEAH. The Helicase C-terminal domain maps to 891-1056; it reads KINMVIQILK…SSKLTIDDLK (166 aa).

Belongs to the SNF2/RAD54 helicase family.

The protein localises to the nucleus. Functionally, dsDNA-dependent ATPase which acts as a transcription termination factor by coupling ATP hydrolysis with removal of RNA polymerase II from the DNA template. The sequence is that of Transcription termination factor 2 (lds) from Drosophila melanogaster (Fruit fly).